Reading from the N-terminus, the 340-residue chain is Ketol-acid reductoisomerase (NADP(+)) (340 aa).

The KARI N-terminal Rossmann domain maps to 2-182 (ANIYYENHAD…GCTRAGVIET (181 aa)). NADP(+)-binding positions include 25 to 28 (FGSQ), Ser-51, Ser-53, and 83 to 86 (DTAQ). His-108 is a catalytic residue. Gly-134 lines the NADP(+) pocket. Positions 183-328 (TFAEETETDL…RELRRMMPFV (146 aa)) constitute a KARI C-terminal knotted domain. Mg(2+) is bound by residues Asp-191, Glu-195, Glu-227, and Glu-231. Position 252 (Ser-252) interacts with substrate.

This sequence belongs to the ketol-acid reductoisomerase family. Mg(2+) serves as cofactor.

It catalyses the reaction (2R)-2,3-dihydroxy-3-methylbutanoate + NADP(+) = (2S)-2-acetolactate + NADPH + H(+). The enzyme catalyses (2R,3R)-2,3-dihydroxy-3-methylpentanoate + NADP(+) = (S)-2-ethyl-2-hydroxy-3-oxobutanoate + NADPH + H(+). Its pathway is amino-acid biosynthesis; L-isoleucine biosynthesis; L-isoleucine from 2-oxobutanoate: step 2/4. It participates in amino-acid biosynthesis; L-valine biosynthesis; L-valine from pyruvate: step 2/4. Functionally, involved in the biosynthesis of branched-chain amino acids (BCAA). Catalyzes an alkyl-migration followed by a ketol-acid reduction of (S)-2-acetolactate (S2AL) to yield (R)-2,3-dihydroxy-isovalerate. In the isomerase reaction, S2AL is rearranged via a Mg-dependent methyl migration to produce 3-hydroxy-3-methyl-2-ketobutyrate (HMKB). In the reductase reaction, this 2-ketoacid undergoes a metal-dependent reduction by NADPH to yield (R)-2,3-dihydroxy-isovalerate. This Roseiflexus castenholzii (strain DSM 13941 / HLO8) protein is Ketol-acid reductoisomerase (NADP(+)).